Here is a 159-residue protein sequence, read N- to C-terminus: NADH-quinone oxidoreductase subunit B (159 aa).

4 residues coordinate [4Fe-4S] cluster: Cys-32, Cys-33, Cys-97, and Cys-126.

This sequence belongs to the complex I 20 kDa subunit family. As to quaternary structure, NDH-1 is composed of 14 different subunits. Subunits NuoB, C, D, E, F, and G constitute the peripheral sector of the complex. [4Fe-4S] cluster serves as cofactor.

It is found in the cell inner membrane. It catalyses the reaction a quinone + NADH + 5 H(+)(in) = a quinol + NAD(+) + 4 H(+)(out). Functionally, NDH-1 shuttles electrons from NADH, via FMN and iron-sulfur (Fe-S) centers, to quinones in the respiratory chain. The immediate electron acceptor for the enzyme in this species is believed to be ubiquinone. Couples the redox reaction to proton translocation (for every two electrons transferred, four hydrogen ions are translocated across the cytoplasmic membrane), and thus conserves the redox energy in a proton gradient. The chain is NADH-quinone oxidoreductase subunit B from Helicobacter pylori (strain HPAG1).